Reading from the N-terminus, the 446-residue chain is Glutamyl-tRNA reductase (446 aa).

Substrate is bound by residues 49-52 (TCNR), Ser-109, 114-116 (ETQ), and Gln-120. Cys-50 acts as the Nucleophile in catalysis. An NADP(+)-binding site is contributed by 189–194 (GAGEMA).

Belongs to the glutamyl-tRNA reductase family. Homodimer.

It carries out the reaction (S)-4-amino-5-oxopentanoate + tRNA(Glu) + NADP(+) = L-glutamyl-tRNA(Glu) + NADPH + H(+). It functions in the pathway porphyrin-containing compound metabolism; protoporphyrin-IX biosynthesis; 5-aminolevulinate from L-glutamyl-tRNA(Glu): step 1/2. Catalyzes the NADPH-dependent reduction of glutamyl-tRNA(Glu) to glutamate 1-semialdehyde (GSA). This Macrococcus caseolyticus (strain JCSC5402) (Macrococcoides caseolyticum) protein is Glutamyl-tRNA reductase.